The sequence spans 509 residues: ATP synthase subunit alpha (509 aa).

169–176 (GDRKTGKT) provides a ligand contact to ATP.

This sequence belongs to the ATPase alpha/beta chains family. In terms of assembly, F-type ATPases have 2 components, CF(1) - the catalytic core - and CF(0) - the membrane proton channel. CF(1) has five subunits: alpha(3), beta(3), gamma(1), delta(1), epsilon(1). CF(0) has three main subunits: a(1), b(2) and c(9-12). The alpha and beta chains form an alternating ring which encloses part of the gamma chain. CF(1) is attached to CF(0) by a central stalk formed by the gamma and epsilon chains, while a peripheral stalk is formed by the delta and b chains.

Its subcellular location is the cell membrane. The enzyme catalyses ATP + H2O + 4 H(+)(in) = ADP + phosphate + 5 H(+)(out). Its function is as follows. Produces ATP from ADP in the presence of a proton gradient across the membrane. The alpha chain is a regulatory subunit. The chain is ATP synthase subunit alpha from Limosilactobacillus reuteri (strain DSM 20016) (Lactobacillus reuteri).